Here is a 367-residue protein sequence, read N- to C-terminus: Ferrochelatase (367 aa).

Positions 213 and 294 each coordinate Fe cation.

It belongs to the ferrochelatase family.

It is found in the cytoplasm. It catalyses the reaction heme b + 2 H(+) = protoporphyrin IX + Fe(2+). It participates in porphyrin-containing compound metabolism; protoheme biosynthesis; protoheme from protoporphyrin-IX: step 1/1. Catalyzes the ferrous insertion into protoporphyrin IX. This chain is Ferrochelatase, found in Dechloromonas aromatica (strain RCB).